Reading from the N-terminus, the 32-residue chain is Photosystem I reaction center subunit XII (32 aa).

The helical transmembrane segment at V9–T28 threads the bilayer.

Belongs to the PsaM family.

Its subcellular location is the cellular thylakoid membrane. The chain is Photosystem I reaction center subunit XII from Nostoc sp. (strain PCC 7120 / SAG 25.82 / UTEX 2576).